Here is a 245-residue protein sequence, read N- to C-terminus: MIIPAIDLIDGNVVRLYQGDYGQQTTFDLSPLAQLQSYEAQGAKWLHIVDLTGAKDPAKRQTRLISQIVAGLNANIQVGGGIRTEEQVTELLNIGVKRVVIGSLAVKEPELVKQWFIKYGSEAICLALDVNINQSGEKIVAVSGWQSGGGKSLESLVETFSAVGLKHALVTDISRDGTLTGANTALYQEIAASYPDIAWQASGGIATLDDVAAVRDSGAAGIIIGKALLINQFNVVEAIQCWPND.

Aspartate 7 functions as the Proton acceptor in the catalytic mechanism. Aspartate 129 functions as the Proton donor in the catalytic mechanism.

The protein belongs to the HisA/HisF family.

The protein localises to the cytoplasm. The catalysed reaction is 1-(5-phospho-beta-D-ribosyl)-5-[(5-phospho-beta-D-ribosylamino)methylideneamino]imidazole-4-carboxamide = 5-[(5-phospho-1-deoxy-D-ribulos-1-ylimino)methylamino]-1-(5-phospho-beta-D-ribosyl)imidazole-4-carboxamide. Its pathway is amino-acid biosynthesis; L-histidine biosynthesis; L-histidine from 5-phospho-alpha-D-ribose 1-diphosphate: step 4/9. The polypeptide is 1-(5-phosphoribosyl)-5-[(5-phosphoribosylamino)methylideneamino] imidazole-4-carboxamide isomerase (Shewanella baltica (strain OS195)).